A 120-amino-acid polypeptide reads, in one-letter code: NAD(P)H-quinone oxidoreductase subunit 3, chloroplastic (120 aa).

3 helical membrane passes run 9–29 (IFWA…LISG), 64–84 (MFAL…PWAM), and 88–108 (VLGV…IVGL).

Belongs to the complex I subunit 3 family. As to quaternary structure, NDH is composed of at least 16 different subunits, 5 of which are encoded in the nucleus.

Its subcellular location is the plastid. The protein localises to the chloroplast thylakoid membrane. The enzyme catalyses a plastoquinone + NADH + (n+1) H(+)(in) = a plastoquinol + NAD(+) + n H(+)(out). It carries out the reaction a plastoquinone + NADPH + (n+1) H(+)(in) = a plastoquinol + NADP(+) + n H(+)(out). NDH shuttles electrons from NAD(P)H:plastoquinone, via FMN and iron-sulfur (Fe-S) centers, to quinones in the photosynthetic chain and possibly in a chloroplast respiratory chain. The immediate electron acceptor for the enzyme in this species is believed to be plastoquinone. Couples the redox reaction to proton translocation, and thus conserves the redox energy in a proton gradient. The polypeptide is NAD(P)H-quinone oxidoreductase subunit 3, chloroplastic (Lupinus luteus (European yellow lupine)).